Here is a 279-residue protein sequence, read N- to C-terminus: Bifunctional protein FolD (279 aa).

NADP(+) is bound by residues 158–160, Ser183, and Ile224; that span reads GRS.

Belongs to the tetrahydrofolate dehydrogenase/cyclohydrolase family. Homodimer.

It carries out the reaction (6R)-5,10-methylene-5,6,7,8-tetrahydrofolate + NADP(+) = (6R)-5,10-methenyltetrahydrofolate + NADPH. The catalysed reaction is (6R)-5,10-methenyltetrahydrofolate + H2O = (6R)-10-formyltetrahydrofolate + H(+). Its pathway is one-carbon metabolism; tetrahydrofolate interconversion. Its function is as follows. Catalyzes the oxidation of 5,10-methylenetetrahydrofolate to 5,10-methenyltetrahydrofolate and then the hydrolysis of 5,10-methenyltetrahydrofolate to 10-formyltetrahydrofolate. In Caldicellulosiruptor saccharolyticus (strain ATCC 43494 / DSM 8903 / Tp8T 6331), this protein is Bifunctional protein FolD.